Here is a 198-residue protein sequence, read N- to C-terminus: Na(+)-translocating NADH-quinone reductase subunit E (198 aa).

6 consecutive transmembrane segments (helical) span residues 11–31 (SVFIENMALSFFLGMCTFLAV), 35–55 (VSTAFGLGIAVIVVLGIAVPA), 77–97 (FLNFITFIGVIAALVQILEMI), 110–130 (GIFLPLITVNCAIFGGVSFMV), 140–160 (VVYGLGAGTGWMLAIVALAGL), and 176–196 (LGITFITVGLMALGFMSFSGI).

It belongs to the NqrDE/RnfAE family. As to quaternary structure, composed of six subunits; NqrA, NqrB, NqrC, NqrD, NqrE and NqrF.

It is found in the cell inner membrane. The enzyme catalyses a ubiquinone + n Na(+)(in) + NADH + H(+) = a ubiquinol + n Na(+)(out) + NAD(+). Functionally, NQR complex catalyzes the reduction of ubiquinone-1 to ubiquinol by two successive reactions, coupled with the transport of Na(+) ions from the cytoplasm to the periplasm. NqrA to NqrE are probably involved in the second step, the conversion of ubisemiquinone to ubiquinol. The polypeptide is Na(+)-translocating NADH-quinone reductase subunit E (Actinobacillus pleuropneumoniae serotype 5b (strain L20)).